Here is a 215-residue protein sequence, read N- to C-terminus: Pyridoxine/pyridoxamine 5'-phosphate oxidase (215 aa).

Substrate is bound by residues 9-12 (RKEY) and K67. FMN contacts are provided by residues 62 to 67 (RIVLLK), 77 to 78 (YT), K84, and Q106. Substrate is bound by residues Y124, R128, and S132. FMN is bound by residues 141–142 (QS) and W187. Residue 193–195 (RLH) participates in substrate binding. R197 contributes to the FMN binding site.

This sequence belongs to the pyridoxamine 5'-phosphate oxidase family. In terms of assembly, homodimer. Requires FMN as cofactor.

The enzyme catalyses pyridoxamine 5'-phosphate + O2 + H2O = pyridoxal 5'-phosphate + H2O2 + NH4(+). The catalysed reaction is pyridoxine 5'-phosphate + O2 = pyridoxal 5'-phosphate + H2O2. The protein operates within cofactor metabolism; pyridoxal 5'-phosphate salvage; pyridoxal 5'-phosphate from pyridoxamine 5'-phosphate: step 1/1. It participates in cofactor metabolism; pyridoxal 5'-phosphate salvage; pyridoxal 5'-phosphate from pyridoxine 5'-phosphate: step 1/1. In terms of biological role, catalyzes the oxidation of either pyridoxine 5'-phosphate (PNP) or pyridoxamine 5'-phosphate (PMP) into pyridoxal 5'-phosphate (PLP). The protein is Pyridoxine/pyridoxamine 5'-phosphate oxidase of Cytophaga hutchinsonii (strain ATCC 33406 / DSM 1761 / CIP 103989 / NBRC 15051 / NCIMB 9469 / D465).